A 226-amino-acid chain; its full sequence is MSYFVSPQSHLGLLPSGQGGAASSGSSLGLYSPAEPVVVAPGGLGPLSQKAEQVAPAAQAWGPTLAVPEARGCSGGVSWETPRRKEHNRYCPKLPPMRPLESLGWADPCSRSRAPYLGGPSRPRPLLLCGLSPGVLPISSEAGGKEAASQPDICILTLAMMIAGIPTVPVPGLREEDLIRAAQAFMMAHPEPEGAVEGVQWEQAHAHAHMASGQMPLVRSRRGSCL.

The helical transmembrane segment at 153–173 threads the bilayer; the sequence is ICILTLAMMIAGIPTVPVPGL.

Belongs to the SPATA25 family. As to expression, expressed strongly in testis, weakly in epididymis and not detected in other tissues.

It is found in the membrane. In terms of biological role, may play a role in spermatogenesis. This Mus musculus (Mouse) protein is Spermatogenesis-associated protein 25 (Spata25).